Reading from the N-terminus, the 348-residue chain is MKLTSEKLPKNPFYASISQYAAKNQKSFQWEKEKTDHYSHANLVDKALQLLKKRILKGDTLAYFLRGQLYFEEGWYEEALEQFEEIEEKDHQATYQLGVMYYDGLGTILNSEKGVDYMKKILDSPCPKARHLKFAAAYNLGRAYYEGKGVKRSNEEAERLWLFAADNGNPKASVKAQSMLGLYYSTKEPKELEKAFYWHSEACGNGNLESQGALGLMYLYGQGIRQDTEAALHCLREAAERGNVYAQGNLVEYYYKMKFFTKCVAFSKRIADYDEVHDIPMIAQVTDCLPEFISRGMAMASFYHARCLQLGLGITRDEATAKHYYSKACRLNPALADELRSLLIRQRI.

One copy of the TPR repeat lies at 60-93 (TLAYFLRGQLYFEEGWYEEALEQFEEIEEKDHQA). Sel1-like repeat units follow at residues 94-126 (TYQL…DSPC), 134-169 (FAAA…DNGN), 174-207 (VKAQ…GNGN), 208-243 (LESQ…ERGN), 244-278 (VYAQ…EVHD), and 298-333 (AMAS…RLNP).

In terms of assembly, interacts with LRP2.

The protein resides in the cytoplasm. Its function is as follows. May act as an adapter that regulates LRP2 function. The chain is LRP2-binding protein (LRP2BP) from Macaca fascicularis (Crab-eating macaque).